A 300-amino-acid chain; its full sequence is MAVVAGLRAFGVKWPSWLRRNPWAPLSAGFCSPGSAGPAGSESEPRLTSTRQQDGIRNIVLSNPRRRNALSLAMLKSLRSDILHEAESEDLKVIIISAEGPVFSSGHDLKELTDAQGRDYHAEVFQTCSEVMMLIRNHPVPILAMVNGLATAAGCQLVASCDIAVASDKSSFATPGVNVGLFCSTPAVALGRAVPRKVALEMLFTGEPISAQEALRHGLISKVVPEEQLEAETMRIAKKISSLSRSVVALGKATFYKQLPQDLRTAYFLASQAMVDNLALQDGQEGIEAFIQKRKPIWSH.

The transit peptide at 1–66 (MAVVAGLRAF…RNIVLSNPRR (66 aa)) directs the protein to the mitochondrion. The interval 34–53 (GSAGPAGSESEPRLTSTRQQ) is disordered. At Lys-110 the chain carries N6-succinyllysine.

This sequence belongs to the enoyl-CoA hydratase/isomerase family.

It localises to the mitochondrion. In terms of biological role, may play a role in fatty acid biosynthesis and insulin sensitivity. The protein is Enoyl-CoA hydratase domain-containing protein 3, mitochondrial of Mus musculus (Mouse).